Consider the following 199-residue polypeptide: MNYYSTSIAKLIEELSKLPGVGPKTAQRLAFFIINMPLEEVKSLSQAIIDAKEKIKYCRICYNITDTEVCNICSDKERDHSLICVVSHPMDVVAMEKIREYKGVYHVLHGVISPIEGVGPEDIKIKELLDRVKNGNVKEVILATNPDIEGEATAMYIAKLLKPLGIKVTRIAHGVPVGGDLEYTDVVTLSRALEGRREL.

The segment at 58–73 (CRICYNITDTEVCNIC) adopts a C4-type zinc-finger fold. Residues 81–176 (SLICVVSHPM…KVTRIAHGVP (96 aa)) form the Toprim domain.

It belongs to the RecR family.

Functionally, may play a role in DNA repair. It seems to be involved in an RecBC-independent recombinational process of DNA repair. It may act with RecF and RecO. The protein is Recombination protein RecR of Thermoanaerobacter sp. (strain X514).